The following is a 273-amino-acid chain: Large ribosomal subunit protein uL2cz/uL2cy (273 aa).

Disordered stretches follow at residues 1–24 (MAIH…QAKS) and 224–254 (NPVD…PALG).

The protein belongs to the universal ribosomal protein uL2 family. In terms of assembly, part of the 50S ribosomal subunit.

The protein resides in the plastid. The protein localises to the chloroplast. In Nymphaea alba (White water-lily), this protein is Large ribosomal subunit protein uL2cz/uL2cy (rpl2-A).